A 204-amino-acid polypeptide reads, in one-letter code: Protein GrpE (204 aa).

Basic and acidic residues-rich tracts occupy residues methionine 1–glycine 21 and glutamate 36–lysine 46. Residues methionine 1 to lysine 46 form a disordered region.

It belongs to the GrpE family. In terms of assembly, homodimer.

It localises to the cytoplasm. Participates actively in the response to hyperosmotic and heat shock by preventing the aggregation of stress-denatured proteins, in association with DnaK and GrpE. It is the nucleotide exchange factor for DnaK and may function as a thermosensor. Unfolded proteins bind initially to DnaJ; upon interaction with the DnaJ-bound protein, DnaK hydrolyzes its bound ATP, resulting in the formation of a stable complex. GrpE releases ADP from DnaK; ATP binding to DnaK triggers the release of the substrate protein, thus completing the reaction cycle. Several rounds of ATP-dependent interactions between DnaJ, DnaK and GrpE are required for fully efficient folding. The chain is Protein GrpE from Caldanaerobacter subterraneus subsp. tengcongensis (strain DSM 15242 / JCM 11007 / NBRC 100824 / MB4) (Thermoanaerobacter tengcongensis).